The sequence spans 612 residues: Indole-3-acetic acid-amido synthetase GH3.6 (612 aa).

It belongs to the IAA-amido conjugating enzyme family. As to expression, expressed in cotyledons, stipules, true leaves, hypocotyls, and all parts of the roots. Not detected in flowers.

In terms of biological role, catalyzes the synthesis of indole-3-acetic acid (IAA)-amino acid conjugates, providing a mechanism for the plant to cope with the presence of excess auxin. Strongly reactive with Glu, Gln, Trp, Asp, Ala, Leu, Phe, Gly, Tyr, Met, Ile and Val. Little or no product formation with His, Ser, Thr, Arg, Lys, or Cys. Also active on pyruvic and butyric acid analogs of IAA, PAA and the synthetic auxin naphthaleneacetic acid (NAA). The two chlorinated synthetic auxin herbicides 2,4-D and 3,6-dichloro-o-anisic acid (dicamba) cannot be used as substrates. Involved in auxin signal transduction. Inhibits shoot and hypocotyl cell elongation, and lateral root cell differentiation in light. This Arabidopsis thaliana (Mouse-ear cress) protein is Indole-3-acetic acid-amido synthetase GH3.6 (GH3.6).